A 99-amino-acid polypeptide reads, in one-letter code: Nucleoid-associated protein SPN23F10240 (99 aa).

This sequence belongs to the YbaB/EbfC family. As to quaternary structure, homodimer.

The protein resides in the cytoplasm. It is found in the nucleoid. Functionally, binds to DNA and alters its conformation. May be involved in regulation of gene expression, nucleoid organization and DNA protection. This Streptococcus pneumoniae (strain ATCC 700669 / Spain 23F-1) protein is Nucleoid-associated protein SPN23F10240.